The primary structure comprises 88 residues: MLEDTTIHNAISDKALSSYFRSSGNLLEEESAVLGQAVTNLMLSGDNVNNKNIILSLIHSLETTSDILKADVIRKTLEIVLRYTADDM.

Belongs to the AriR family. In terms of assembly, homodimer.

In terms of biological role, regulates expression of genes involved in acid-resistance and biofilm formation. May be a non-specific DNA-binding protein that binds genes and/or intergenic regions via a geometric recognition. This Escherichia coli O1:K1 / APEC protein is Regulatory protein AriR (ariR).